A 159-amino-acid chain; its full sequence is Ribosomal RNA large subunit methyltransferase H (159 aa).

S-adenosyl-L-methionine-binding positions include Leu-76, Gly-108, and 127 to 132; that span reads FGLLTL.

Belongs to the RNA methyltransferase RlmH family. Homodimer.

It localises to the cytoplasm. The catalysed reaction is pseudouridine(1915) in 23S rRNA + S-adenosyl-L-methionine = N(3)-methylpseudouridine(1915) in 23S rRNA + S-adenosyl-L-homocysteine + H(+). Specifically methylates the pseudouridine at position 1915 (m3Psi1915) in 23S rRNA. This Streptococcus equi subsp. zooepidemicus (strain MGCS10565) protein is Ribosomal RNA large subunit methyltransferase H.